The following is a 168-amino-acid chain: uncharacterized protein (168 aa).

3 disordered regions span residues 37-74, 81-100, and 117-168; these read GGSK…SQFT, QYNY…PNYY, and MQPF…EETN. Polar residues-rich tracts occupy residues 52-74 and 82-95; these read HSGQ…SQFT and YNYN…TRSV. Low complexity predominate over residues 120–129; the sequence is FNNQSFNNQS. Residues 130 to 158 show a composition bias toward polar residues; the sequence is RTHQSKTYQHNQQKRSFNGPRNNGPQNNV.

This is an uncharacterized protein from Acanthamoeba polyphaga (Amoeba).